Consider the following 655-residue polypeptide: Inactive serine protease scarface (655 aa).

A signal peptide spans 1 to 24 (MSASHFREQLALCITLAVLAAASG). 2 stretches are compositionally biased toward polar residues: residues 213 to 225 (TQAPFRPQPTTAV) and 237 to 252 (PSTTQHPSYEKVQTSR). Residues 213–319 (TQAPFRPQPT…QPSNQKPIYR (107 aa)) are disordered. The segment at 343–407 (KCASALVCTS…PNYVDPWPVN (65 aa)) is CLIP. 7 disulfide bridges follow: Cys344–Cys394, Cys350–Cys383, Cys356–Cys395, Cys450–Cys466, Cys547–Cys605, Cys579–Cys587, and Cys595–Cys623. The Peptidase S1 domain maps to 421-644 (PTGVKDLDAN…DIKWINTAFA (224 aa)).

This sequence belongs to the peptidase S1 family.

The protein resides in the secreted. Inactive serine protease that plays a role in germ-band retraction and dorsal closure morphogenesis in embryogenesis; contributes to amnioserosa attachment and epithelial apico-basal polarity by regulating the localization of laminin LanA on the apical side of the amnioserosa epithelium. Contributes to epithelial morphogenesis probably by regulating the bsk/JNK pathway, as part of a negative-feedback loop, and by modulating the cross-talk between the Egfr, bsk/JNK and dpp signal transduction pathways. In larval development, antagonizes the morphogenetic movements controlled by the bsk/JNK signaling including male genitalia formation and thorax development. This is Inactive serine protease scarface from Drosophila melanogaster (Fruit fly).